The chain runs to 903 residues: KAT8 regulatory NSL complex subunit 1-like protein (903 aa).

Disordered regions lie at residues 319 to 343 (DSDA…DECN), 419 to 441 (MPKS…PSSP), and 652 to 676 (TECT…HRSE). Polar residues-rich tracts occupy residues 423–441 (PQGT…PSSP) and 652–661 (TECTSSYSPD). The PEHE domain occupies 748–862 (EIITPSWKEV…ESPKGKTIHW (115 aa)).

The chain is KAT8 regulatory NSL complex subunit 1-like protein (kansl1l) from Xenopus tropicalis (Western clawed frog).